An 868-amino-acid chain; its full sequence is Cytosolic phospholipase A2 epsilon (868 aa).

The interval 1–46 (MSLQASEGCPGLGTNVFVPQSPQTDEEGSRSGRSFSEFEDTQDLDT) is disordered. In terms of domain architecture, C2 spans 46–170 (TPGLPPFCPM…CFRKKTHVKF (125 aa)). Ca(2+) is bound by residues Asp-84, Asp-90, Asp-140, Asp-142, and Asp-148. The PLA2c domain occupies 324 to 856 (PCPETLDVRL…TLLQALRLAV (533 aa)). Residue Ser-412 is the Nucleophile of the active site. Asp-700 (proton acceptor) is an active-site residue. Position 800 is a phosphoserine (Ser-800). The tract at residues 857-868 (EKKKRLKGQCPS) is required for localization at membrane structures.

Ca(2+) is required as a cofactor.

It is found in the cytoplasm. The protein localises to the cytosol. Its subcellular location is the early endosome membrane. It localises to the lysosome membrane. The protein resides in the cell membrane. The catalysed reaction is a 1,2-diacyl-sn-glycero-3-phosphoethanolamine + a 1,2-diacyl-sn-glycero-3-phosphocholine = an N-acyl-1,2-diacyl-sn-glycero-3-phosphoethanolamine + a 2-acyl-sn-glycero-3-phosphocholine + H(+). The enzyme catalyses 1-hexadecanoyl-2-octadecanoyl-sn-glycero-3-phosphocholine + 1,2-di-(9Z-octadecenoyl)-sn-glycero-3-phosphoethanolamine = 2-octadecanoyl-sn-glycero-3-phosphocholine + N-hexadecanoyl-1,2-di-(9Z-octadecenoyl)-sn-glycero-3-phosphoethanolamine + H(+). It catalyses the reaction 1-octadecanoyl-2-hexadecanoyl-sn-glycero-3-phosphocholine + 1,2-di-(9Z-octadecenoyl)-sn-glycero-3-phosphoethanolamine = N-octadecanoyl-1,2-di-(9Z-octadecenoyl)-sn-glycero-3-phosphoethanolamine + 2-hexadecanoyl-sn-glycero-3-phosphocholine + H(+). It carries out the reaction 1,2-di-(9Z-octadecenoyl)-sn-glycero-3-phosphoethanolamine + 1,2-dihexadecanoyl-sn-glycero-3-phosphocholine = N-hexadecanoyl-1,2-di-(9Z-octadecenoyl)-sn-glycero-3-phosphoethanolamine + 2-hexadecanoyl-sn-glycero-3-phosphocholine + H(+). The catalysed reaction is 1,2-di-(5Z,8Z,11Z,14Z-eicosatetraenoyl)-sn-glycero-3-phosphocholine + 1,2-di-(9Z-octadecenoyl)-sn-glycero-3-phosphoethanolamine = N-(5Z,8Z,11Z,14Z-eicosatetraenoyl)-1,2-di-(9Z-octadecenoyl)-sn-glycero-3-phosphoethanolamine + 2-(5Z,8Z,11Z,14Z)-eicosatetraenoyl-sn-glycero-3-phosphocholine + H(+). The enzyme catalyses 2 1,2-di-(9Z-octadecenoyl)-sn-glycero-3-phosphoethanolamine = N,1,2-tri-(9Z-octadecenoyl)-sn-glycero-3-phosphoethanolamine + 2-(9Z-octadecenoyl)-sn-glycero-3-phosphoethanolamine + H(+). It catalyses the reaction 1-(1Z-octadecenyl)-2-(9Z-octadecenoyl)-sn-glycero-3-phosphoethanolamine + 1,2-dihexadecanoyl-sn-glycero-3-phosphocholine = 1-O-(1Z-octadecenoyl)-2-(9Z-octadecenoyl)-sn-glycero-3-phospho-N-hexadecanoyl-ethanolamine + 2-hexadecanoyl-sn-glycero-3-phosphocholine + H(+). It carries out the reaction a 1,2-diacyl-sn-glycero-3-phosphocholine + H2O = a 1-acyl-sn-glycero-3-phosphocholine + a fatty acid + H(+). The catalysed reaction is 1-hexadecanoyl-2-(5Z,8Z,11Z,14Z-eicosatetraenoyl)-sn-glycero-3-phosphocholine + H2O = 1-hexadecanoyl-sn-glycero-3-phosphocholine + (5Z,8Z,11Z,14Z)-eicosatetraenoate + H(+). The enzyme catalyses 1-hexadecanoyl-sn-glycero-3-phosphocholine + H2O = sn-glycerol 3-phosphocholine + hexadecanoate + H(+). Its activity is regulated as follows. Stimulated by cytosolic Ca(2+). Stimulated by anionic phospholipids such as phosphatidylserines, phosphatidates and phosphatidylinositols. In terms of biological role, calcium-dependent N-acyltransferase involved in the biosynthesis of N-acyl ethanolamines (NAEs) in the brain. Transfers the sn-1 fatty acyl chain of phosphatidylcholine (fatty acyl donor) to the amine group of phosphatidylethanolamine (fatty acyl acceptor) to generate N-acyl phosphatidylethanolamine (NAPE). Similarly can use plasmenylethanolamine as a fatty acyl acceptor to form N-acyl plasmenylethanolamine (N-Acyl-PlsEt). Both NAPE and N-Acyl-PlsEt can serve as precursors of bioactive NAEs like N-arachidonoyl phosphatidylethanolamine also called anandamide. Has weak phospholipase A2 and lysophospholipase activities. Regulates intracellular membrane trafficking that requires modulation of membrane curvature as it occurs by enrichment in lysophospholipids. Promotes tubule formation involved in clathrin-independent endocytotic trafficking and cargo recycling. The sequence is that of Cytosolic phospholipase A2 epsilon from Homo sapiens (Human).